The primary structure comprises 375 residues: UDP-N-acetylglucosamine--N-acetylmuramyl-(pentapeptide) pyrophosphoryl-undecaprenol N-acetylglucosamine transferase (375 aa).

Residues 13–15, Asn-124, Arg-165, Ser-193, and Gln-294 contribute to the UDP-N-acetyl-alpha-D-glucosamine site; that span reads TGG.

The protein belongs to the glycosyltransferase 28 family. MurG subfamily.

It is found in the cell inner membrane. The enzyme catalyses di-trans,octa-cis-undecaprenyl diphospho-N-acetyl-alpha-D-muramoyl-L-alanyl-D-glutamyl-meso-2,6-diaminopimeloyl-D-alanyl-D-alanine + UDP-N-acetyl-alpha-D-glucosamine = di-trans,octa-cis-undecaprenyl diphospho-[N-acetyl-alpha-D-glucosaminyl-(1-&gt;4)]-N-acetyl-alpha-D-muramoyl-L-alanyl-D-glutamyl-meso-2,6-diaminopimeloyl-D-alanyl-D-alanine + UDP + H(+). It functions in the pathway cell wall biogenesis; peptidoglycan biosynthesis. Functionally, cell wall formation. Catalyzes the transfer of a GlcNAc subunit on undecaprenyl-pyrophosphoryl-MurNAc-pentapeptide (lipid intermediate I) to form undecaprenyl-pyrophosphoryl-MurNAc-(pentapeptide)GlcNAc (lipid intermediate II). In Chelativorans sp. (strain BNC1), this protein is UDP-N-acetylglucosamine--N-acetylmuramyl-(pentapeptide) pyrophosphoryl-undecaprenol N-acetylglucosamine transferase.